Here is a 387-residue protein sequence, read N- to C-terminus: Phosphoglycerate kinase (387 aa).

Substrate is bound by residues 21-23 (DLN), Arg36, 59-62 (HLGR), Arg113, and Arg146. ATP is bound by residues Lys197, Glu314, and 340–343 (GGDT).

It belongs to the phosphoglycerate kinase family. Monomer.

It is found in the cytoplasm. It catalyses the reaction (2R)-3-phosphoglycerate + ATP = (2R)-3-phospho-glyceroyl phosphate + ADP. Its pathway is carbohydrate degradation; glycolysis; pyruvate from D-glyceraldehyde 3-phosphate: step 2/5. The protein is Phosphoglycerate kinase of Pseudomonas putida (strain ATCC 47054 / DSM 6125 / CFBP 8728 / NCIMB 11950 / KT2440).